The primary structure comprises 315 residues: Glutaminase (315 aa).

Positions 70, 120, 166, 173, 197, 249, and 267 each coordinate substrate.

This sequence belongs to the glutaminase family. In terms of assembly, homotetramer.

The catalysed reaction is L-glutamine + H2O = L-glutamate + NH4(+). This chain is Glutaminase, found in Rhizobium meliloti (strain 1021) (Ensifer meliloti).